Here is a 512-residue protein sequence, read N- to C-terminus: GMP synthase [glutamine-hydrolyzing] (512 aa).

The 190-residue stretch at 6–195 folds into the Glutamine amidotransferase type-1 domain; that stretch reads KIIILDFGSQ…VFNICGCQPK (190 aa). Cys83 serves as the catalytic Nucleophile. Active-site residues include His169 and Glu171. The 192-residue stretch at 196–387 folds into the GMPS ATP-PPase domain; sequence WKITEFISAA…LGIDFKFVYK (192 aa). ATP is bound at residue 223–229; the sequence is SGGVDSS.

Homodimer.

It carries out the reaction XMP + L-glutamine + ATP + H2O = GMP + L-glutamate + AMP + diphosphate + 2 H(+). It participates in purine metabolism; GMP biosynthesis; GMP from XMP (L-Gln route): step 1/1. Its function is as follows. Catalyzes the synthesis of GMP from XMP. The polypeptide is GMP synthase [glutamine-hydrolyzing] (Spiroplasma kunkelii).